Here is a 253-residue protein sequence, read N- to C-terminus: Ubiquinone/menaquinone biosynthesis C-methyltransferase UbiE (253 aa).

Residues threonine 76, aspartate 97, asparagine 125–alanine 126, and serine 142 contribute to the S-adenosyl-L-methionine site.

Belongs to the class I-like SAM-binding methyltransferase superfamily. MenG/UbiE family.

The catalysed reaction is a 2-demethylmenaquinol + S-adenosyl-L-methionine = a menaquinol + S-adenosyl-L-homocysteine + H(+). The enzyme catalyses a 2-methoxy-6-(all-trans-polyprenyl)benzene-1,4-diol + S-adenosyl-L-methionine = a 5-methoxy-2-methyl-3-(all-trans-polyprenyl)benzene-1,4-diol + S-adenosyl-L-homocysteine + H(+). It functions in the pathway quinol/quinone metabolism; menaquinone biosynthesis; menaquinol from 1,4-dihydroxy-2-naphthoate: step 2/2. It participates in cofactor biosynthesis; ubiquinone biosynthesis. Methyltransferase required for the conversion of demethylmenaquinol (DMKH2) to menaquinol (MKH2) and the conversion of 2-polyprenyl-6-methoxy-1,4-benzoquinol (DDMQH2) to 2-polyprenyl-3-methyl-6-methoxy-1,4-benzoquinol (DMQH2). This Xylella fastidiosa (strain M12) protein is Ubiquinone/menaquinone biosynthesis C-methyltransferase UbiE.